The primary structure comprises 198 residues: Na(+)-translocating NADH-quinone reductase subunit E (198 aa).

Helical transmembrane passes span 11-31 (AVFVENMALAFFLGMCTFLAV), 35-55 (VSTAFGLGIAVTVVLGISVPA), 77-97 (FLNFITFIGVIAAIVQVLEMI), 109-129 (LGIFLPLITVNCAIFGGVSFM), 140-160 (IVYGFGSGIGWMLAIVALAGI), and 176-196 (LGITFITTGLMALGFMSFSGV).

This sequence belongs to the NqrDE/RnfAE family. Composed of six subunits; NqrA, NqrB, NqrC, NqrD, NqrE and NqrF.

The protein resides in the cell inner membrane. The enzyme catalyses a ubiquinone + n Na(+)(in) + NADH + H(+) = a ubiquinol + n Na(+)(out) + NAD(+). Functionally, NQR complex catalyzes the reduction of ubiquinone-1 to ubiquinol by two successive reactions, coupled with the transport of Na(+) ions from the cytoplasm to the periplasm. NqrA to NqrE are probably involved in the second step, the conversion of ubisemiquinone to ubiquinol. The sequence is that of Na(+)-translocating NADH-quinone reductase subunit E from Yersinia enterocolitica serotype O:8 / biotype 1B (strain NCTC 13174 / 8081).